The chain runs to 614 residues: Aspartate--tRNA ligase (614 aa).

Residue Glu174 participates in L-aspartate binding. The aspartate stretch occupies residues 198-201; the sequence is QLFK. Arg220 serves as a coordination point for L-aspartate. ATP is bound by residues 220–222 and Gln229; that span reads RDE. His448 provides a ligand contact to L-aspartate. An ATP-binding site is contributed by Glu482. Arg489 is an L-aspartate binding site. An ATP-binding site is contributed by 534-537; it reads GLDR.

The protein belongs to the class-II aminoacyl-tRNA synthetase family. Type 1 subfamily. Homodimer.

It localises to the cytoplasm. It carries out the reaction tRNA(Asp) + L-aspartate + ATP = L-aspartyl-tRNA(Asp) + AMP + diphosphate. In terms of biological role, catalyzes the attachment of L-aspartate to tRNA(Asp) in a two-step reaction: L-aspartate is first activated by ATP to form Asp-AMP and then transferred to the acceptor end of tRNA(Asp). In Lactobacillus acidophilus (strain ATCC 700396 / NCK56 / N2 / NCFM), this protein is Aspartate--tRNA ligase.